Consider the following 343-residue polypeptide: Putative adenosine/adenine deaminase (343 aa).

Zn(2+) is bound by residues H16, H18, and H204. H18 is a substrate binding site. E207 acts as the Proton donor in catalysis. Position 285 (D285) interacts with Zn(2+). D286 is a binding site for substrate.

It belongs to the metallo-dependent hydrolases superfamily. Adenosine and AMP deaminases family. It depends on Zn(2+) as a cofactor.

In terms of biological role, putative nucleoside deaminase. May catalyze the hydrolytic deamination of adenosine or some similar substrate and play a role in purine metabolism. This chain is Putative adenosine/adenine deaminase, found in Streptomyces coelicolor (strain ATCC BAA-471 / A3(2) / M145).